Here is a 143-residue protein sequence, read N- to C-terminus: UPF0763 protein HH_0976 (143 aa).

It belongs to the UPF0763 family.

The polypeptide is UPF0763 protein HH_0976 (Helicobacter hepaticus (strain ATCC 51449 / 3B1)).